The following is a 431-amino-acid chain: Trigger factor (431 aa).

Residues 165–250 enclose the PPIase FKBP-type domain; the sequence is GDTVVIDFDG…IHELKRKELP (86 aa).

The protein belongs to the FKBP-type PPIase family. Tig subfamily.

It localises to the cytoplasm. It catalyses the reaction [protein]-peptidylproline (omega=180) = [protein]-peptidylproline (omega=0). Its function is as follows. Involved in protein export. Acts as a chaperone by maintaining the newly synthesized protein in an open conformation. Functions as a peptidyl-prolyl cis-trans isomerase. The polypeptide is Trigger factor (Leuconostoc citreum (strain KM20)).